We begin with the raw amino-acid sequence, 469 residues long: D-3-phosphoglycerate dehydrogenase 1 (469 aa).

A phosphoserine mark is found at serine 22, serine 29, and serine 33. Residues 208 to 209 (HI), aspartate 228, 285 to 287 (ASR), and aspartate 311 contribute to the NAD(+) site. Arginine 287 is an active-site residue. Glutamate 316 is an active-site residue. Histidine 347 (proton donor) is an active-site residue. 347–350 (HIGG) is a binding site for NAD(+). Residues 399–469 (RVLYIHQNVP…SAKISIRLLY (71 aa)) form the ACT domain.

Belongs to the D-isomer specific 2-hydroxyacid dehydrogenase family.

The catalysed reaction is (2R)-3-phosphoglycerate + NAD(+) = 3-phosphooxypyruvate + NADH + H(+). It carries out the reaction (R)-2-hydroxyglutarate + NAD(+) = 2-oxoglutarate + NADH + H(+). It functions in the pathway amino-acid biosynthesis; L-serine biosynthesis; L-serine from 3-phospho-D-glycerate: step 1/3. Its function is as follows. Catalyzes the reversible oxidation of 3-phospho-D-glycerate to 3-phosphonooxypyruvate, the first step of the phosphorylated L-serine biosynthesis pathway. Also catalyzes the reversible oxidation of 2-hydroxyglutarate to 2-oxoglutarate. The chain is D-3-phosphoglycerate dehydrogenase 1 (SER3) from Saccharomyces cerevisiae (strain ATCC 204508 / S288c) (Baker's yeast).